The primary structure comprises 671 residues: Phospholipid:diacylglycerol acyltransferase 1 (671 aa).

Residues 1–46 form a disordered region; that stretch reads MPLIHRKKPTEKPSTPPSEEVVHDEDSQKKPHESSKSHHKKSNGGG. At 1–54 the chain is on the cytoplasmic side; the sequence is MPLIHRKKPTEKPSTPPSEEVVHDEDSQKKPHESSKSHHKKSNGGGKWSCIDSC. Residues 20 to 36 show a composition bias toward basic and acidic residues; that stretch reads EVVHDEDSQKKPHESSK. A helical membrane pass occupies residues 55–75; sequence CWFIGCVCVTWWFLLFLYNAM. The Lumenal segment spans residues 76 to 671; it reads PASFPQYVTE…EWSERIDLKL (596 aa). A glycan (N-linked (GlcNAc...) asparagine) is linked at Asn161. Ser254 (acyl-ester intermediate) is an active-site residue. Asn381 and Asn434 each carry an N-linked (GlcNAc...) asparagine glycan. Active-site charge relay system residues include Asp573 and His626. Asn647 carries N-linked (GlcNAc...) asparagine glycosylation.

The protein belongs to the AB hydrolase superfamily. Lipase family. As to expression, ubiquitous. Highest expression in young developing seeds.

The protein localises to the membrane. The catalysed reaction is a glycerophospholipid + a 1,2-diacyl-sn-glycerol = a monoacylglycerophospholipid + a triacyl-sn-glycerol. The protein operates within glycerolipid metabolism; triacylglycerol biosynthesis. Its function is as follows. Triacylglycerol formation by an acyl-CoA independent pathway. The enzyme preferentially transfers acyl groups from the sn-2 position of a phospholipid to diacylglycerol, thus forming an sn-1-lysophospholipid. Involved in epoxy and hydroxy fatty acid accumulation in seeds. Has complementary functions with DAG1 that are essential for triacylglycerol synthesis and normal development of both seeds and pollen. The sequence is that of Phospholipid:diacylglycerol acyltransferase 1 (PDAT1) from Arabidopsis thaliana (Mouse-ear cress).